Consider the following 265-residue polypeptide: Short chain dehydrogenase mdpC (265 aa).

Isoleucine 25, asparagine 98, and arginine 131 together coordinate NADP(+). Residues serine 147 and serine 148 each act as proton donor in the active site. NADP(+) is bound by residues tyrosine 162, lysine 166, and threonine 197. Tyrosine 162 (proton acceptor) is an active-site residue. The active-site Lowers pKa of active site Tyr is lysine 166.

This sequence belongs to the short-chain dehydrogenases/reductases (SDR) family.

The catalysed reaction is 3,8,9,10-tetrahydroxy-6-methyl-1,4-dihydroanthracen-1-one + NADPH + H(+) = (3R)-3,8,9,10-tetrahydroxy-6-methyl-1,2,3,4-tetrahydroanthracen-1-one + NADP(+). The protein operates within secondary metabolite biosynthesis. Functionally, short chain dehydrogenase; part of the gene cluster that mediates the biosynthesis of monodictyphenone, a prenyl xanthone derivative. The pathway begins with the synthesis of atrochrysone thioester by the polyketide synthase (PKS) mdpG. The atrochrysone carboxyl ACP thioesterase mdpF then breaks the thioester bond and releases the atrochrysone carboxylic acid from mdpG. The atrochrysone carboxylic acid is then converted to atrochrysone which is further transformed into emodin anthrone. The next step is performed by the anthrone oxygenase mdpH that catalyzes the oxidation of emodinanthrone to emodin. Emodin is further modified to yield monodictyphenone via several steps involving mdpB, mdpC mdpJ, mdpK and mdpL. The short chain dehydrogenase mdpC converts the tautomers of emodin hydroquinone into the 3-hydroxy-3,4-dihydroan-thracen-1(2H)-one derivative. These enzymes with xptA, xptB and xptC are also proposed to be involved in the synthesis of shamixanthone from emodin. Especially, direct reduction of emodin by the short chain dehydrogenase mdpC followed by dehydration catalyzed by the scytalone dehydratase-like protein mdpB gives loss of oxygen and formation of chrysophanol intermediate in two simple steps. The protein is Short chain dehydrogenase mdpC of Emericella nidulans (strain FGSC A4 / ATCC 38163 / CBS 112.46 / NRRL 194 / M139) (Aspergillus nidulans).